A 346-amino-acid chain; its full sequence is 4-hydroxy-2-oxovalerate aldolase (346 aa).

Residues valine 8–glutamine 260 form the Pyruvate carboxyltransferase domain. Arginine 16–aspartate 17 serves as a coordination point for substrate. Aspartate 17 contributes to the Mn(2+) binding site. Histidine 20 functions as the Proton acceptor in the catalytic mechanism. Residues serine 170 and histidine 199 each contribute to the substrate site. Mn(2+)-binding residues include histidine 199 and histidine 201. Residue tyrosine 290 coordinates substrate.

It belongs to the 4-hydroxy-2-oxovalerate aldolase family.

It catalyses the reaction (S)-4-hydroxy-2-oxopentanoate = acetaldehyde + pyruvate. This is 4-hydroxy-2-oxovalerate aldolase from Polaromonas naphthalenivorans (strain CJ2).